Here is a 275-residue protein sequence, read N- to C-terminus: 3-methyl-2-oxobutanoate hydroxymethyltransferase (275 aa).

Aspartate 49 and aspartate 88 together coordinate Mg(2+). Residues 49–50 (DS), aspartate 88, and lysine 118 each bind 3-methyl-2-oxobutanoate. Position 120 (glutamate 120) interacts with Mg(2+). The active-site Proton acceptor is glutamate 187.

This sequence belongs to the PanB family. Homodecamer; pentamer of dimers. Mg(2+) is required as a cofactor.

The protein localises to the cytoplasm. It catalyses the reaction 3-methyl-2-oxobutanoate + (6R)-5,10-methylene-5,6,7,8-tetrahydrofolate + H2O = 2-dehydropantoate + (6S)-5,6,7,8-tetrahydrofolate. It functions in the pathway cofactor biosynthesis; (R)-pantothenate biosynthesis; (R)-pantoate from 3-methyl-2-oxobutanoate: step 1/2. Functionally, catalyzes the reversible reaction in which hydroxymethyl group from 5,10-methylenetetrahydrofolate is transferred onto alpha-ketoisovalerate to form ketopantoate. This Rhodospirillum centenum (strain ATCC 51521 / SW) protein is 3-methyl-2-oxobutanoate hydroxymethyltransferase.